We begin with the raw amino-acid sequence, 76 residues long: Conotoxin Cal5a L2 (76 aa).

Residues 1–22 form the signal peptide; sequence MRFYIGLMAALMLTSILRTDSA. The propeptide occupies 23–42; that stretch reads SVGQTGTKSELALIERVIRQ. Proline 50 carries the 4-hydroxyproline modification. 3 positions are modified to 4-hydroxyproline; partial: proline 58, proline 62, and proline 64.

Belongs to the conotoxin T superfamily. Post-translationally, contains 2 disulfide bonds that can be either 'C1-C3, C2-C4' or 'C1-C4, C2-C3', since these disulfide connectivities have been observed for conotoxins with cysteine framework V (for examples, see AC P0DQQ7 and AC P81755). Expressed by the venom duct.

The protein resides in the secreted. Its function is as follows. Probable neurotoxin with unknown target. Possibly targets ion channels. This is Conotoxin Cal5a L2 from Californiconus californicus (California cone).